A 374-amino-acid chain; its full sequence is Cathepsin W (374 aa).

The N-terminal stretch at methionine 1–glycine 21 is a signal peptide. Positions isoleucine 22–serine 127 are excised as a propeptide. Disulfide bonds link cysteine 150/cysteine 191 and cysteine 184/cysteine 226. Cysteine 153 is an active-site residue. N-linked (GlcNAc...) asparagine glycosylation occurs at asparagine 205. Active-site residues include histidine 291 and asparagine 329. The N-linked (GlcNAc...) asparagine glycan is linked to asparagine 347.

It belongs to the peptidase C1 family.

The protein localises to the endoplasmic reticulum. May have a specific function in the mechanism or regulation of T-cell cytolytic activity. The sequence is that of Cathepsin W (CTSW) from Felis catus (Cat).